A 407-amino-acid polypeptide reads, in one-letter code: Serine/threonine transporter SstT (407 aa).

A run of 9 helical transmembrane segments spans residues 14-34 (GSLV…ATVS), 48-68 (FVGA…AASI), 82-102 (IVIL…LMSF), 141-161 (AVLT…GLAL), 192-212 (IGIF…AIAG), 216-236 (LLLV…PAIV), 290-310 (IPLG…ILTL), 316-336 (MGIQ…GVSA), and 363-383 (VAMQ…SAET).

Belongs to the dicarboxylate/amino acid:cation symporter (DAACS) (TC 2.A.23) family.

The protein localises to the cell inner membrane. It carries out the reaction L-serine(in) + Na(+)(in) = L-serine(out) + Na(+)(out). It catalyses the reaction L-threonine(in) + Na(+)(in) = L-threonine(out) + Na(+)(out). Functionally, involved in the import of serine and threonine into the cell, with the concomitant import of sodium (symport system). This chain is Serine/threonine transporter SstT, found in Shewanella halifaxensis (strain HAW-EB4).